Here is a 275-residue protein sequence, read N- to C-terminus: Phospholipid scramblase (275 aa).

The helical transmembrane segment at 256-272 threads the bilayer; the sequence is WKMMLLAFALFLDYMYY.

The protein belongs to the phospholipid scramblase family. Forms homooligomers in the presence of calcium. Ca(2+) serves as cofactor. Mg(2+) is required as a cofactor.

The protein resides in the membrane. Its subcellular location is the cell membrane. The enzyme catalyses a 1,2-diacyl-sn-glycero-3-phosphoethanolamine(in) = a 1,2-diacyl-sn-glycero-3-phosphoethanolamine(out). Catalyzes calcium-induced ATP-independent rapid bidirectional and non-specific movement of phospholipids (lipid scrambling or lipid flip-flop) between the inner and outer leaflet of the plasma membrane resulting in collapse of the phospholipid asymmetry. Preferentially, mediates calcium-dependent phosphatidylethanolamine externalization. During the liver stage, plays a role in the interaction with, and thus invasion of, host hepatocytes. Dispensable for host erythrocyte invasion and asexual parasite development. This Plasmodium falciparum (isolate 3D7) protein is Phospholipid scramblase.